The sequence spans 413 residues: MSLLHHLVTLPSRPITRDAYLPQLQNLLRSGIPATYTLEQLAAYEKGDEEGPGDEDTNTTPLHIMARSLPEAGQLSEAESEVVLEIMDTLFQYGAGWNFLDYEQKHAGDLLLEKGYGPGDALYERLVEAGVAAELLLRKVNGGEIEFLDGSDTEMGDKGGSARDVPASADSAPADSAGHSSSEPTAVDADATAAHQDTYLQTELEYIPGALVTKHNRDGVMMDWETDIMRVAAASIVKNREPAECQVLNIGFGMGIIDGFLQEQRPTRHYICEAHPDVLARMRREGWYERPDVVILEGRWQDTLSRLLDDGTVFFDGIYYDTFSEHYTDMLELYDLVVGLIKPCGIFSFFNGLGADRQVCYDVYRRIVELDMATYGMTCEYTTIDLRQLPTWDNVRRSYFNCDHYYHPEISFQ.

The tract at residues Leu148–Val187 is disordered. Over residues Ala162–Ser182 the composition is skewed to low complexity. One can recognise an RMT2 domain in the interval Thr192–Gln413. S-adenosyl-L-methionine contacts are provided by residues Tyr199, Met229, Phe252–Ile257, Glu273–His275, Trp300–Gln301, and Asp321.

This sequence belongs to the class I-like SAM-binding methyltransferase superfamily. RMT2 methyltransferase family. In terms of assembly, monomer.

The protein resides in the cytoplasm. Its subcellular location is the nucleus. Its function is as follows. S-adenosyl-L-methionine-dependent protein-arginine N-methyltransferase that methylates the delta-nitrogen atom of arginine residues to form N5-methylarginine (type IV) in target proteins. Monomethylates ribosomal protein L12. This is Protein arginine N-methyltransferase 2 from Eremothecium gossypii (strain ATCC 10895 / CBS 109.51 / FGSC 9923 / NRRL Y-1056) (Yeast).